A 464-amino-acid chain; its full sequence is Putative guanine nucleotide-binding protein subunit alpha (464 aa).

A G-alpha domain is found at histidine 33 to lysine 415. The interval leucine 36–threonine 49 is G1 motif. GTP-binding positions include glycine 41–serine 48, aspartate 147–glutamine 151, leucine 214–threonine 220, aspartate 239–glutamine 243, arginine 268–aspartate 271, and threonine 310–serine 313. Serine 48 provides a ligand contact to Mg(2+). The G2 motif stretch occupies residues aspartate 212 to threonine 220. Position 220 (threonine 220) interacts with Mg(2+). The tract at residues phenylalanine 235 to arginine 244 is G3 motif. Residues valine 306–serine 313 form a G4 motif region. The G5 motif stretch occupies residues glycine 382–cysteine 387.

The protein in the N-terminal section; belongs to the G-alpha family. It in the C-terminal section; belongs to the class-II aminoacyl-tRNA synthetase family. In terms of assembly, g proteins are composed of 3 units; alpha, beta and gamma. The alpha chain contains the guanine nucleotide binding site.

Its function is as follows. Guanine nucleotide-binding proteins (G proteins) are involved as modulators or transducers in various transmembrane signaling systems. This chain is Putative guanine nucleotide-binding protein subunit alpha, found in Leishmania donovani.